A 370-amino-acid chain; its full sequence is Peptidyl-prolyl cis-trans isomerase D (370 aa).

Phosphoserine is present on Ser-5. The PPIase cyclophilin-type domain occupies 19–183 (FFDVDIGGER…KLCVIAECGE (165 aa)). At Lys-171 the chain carries N6-acetyllysine. The interval 185 to 215 (KEGDDWGIFPKDGSGDSHPDFPEDADVDLKD) is chaperone activity. Ser-198 is subject to Phosphoserine. Residues 214–370 (KDVDKILLIS…EKAAYAKMFA (157 aa)) are interaction with HSP90AB1. TPR repeat units lie at residues 223–256 (SEDLKNIGNTFFKSQNWEMAIKKYTKVLRYVEGS), 273–306 (LSCVLNIGACKLKMSDWQGAVDSCLEALEIDPSN), and 307–340 (TKALYRRAQGWQGLKEYDQALADLKKAQEIAPED).

This sequence belongs to the cyclophilin-type PPIase family. PPIase D subfamily. As to quaternary structure, identified in ESR1 or NR3C1/GCR steroid receptor-chaperone complexes. Found in HSP90 chaperone complexes with kinase clients LCK or EIF2AK1. Two monomers associate with one HSP90 homodimer. Interacts with HSP90AA1. Interacts with HSP90AB1; PPID and FKBP4 compete for binding to HSP90AB1 and the interaction is mutually exclusive with the PPID:HSPA8 interaction. Interacts with HSPA8; PPID and STIP1 but not FKBP4 compete for binding to HSPA8 and the interaction is mutually exclusive with the PPID:HSP90AB1 interaction. Interacts with S100A1 and S100A2; the interactions dissociate the PPID:HSP90AA1 interaction. Interacts with S100A6. Interacts with MYB, ILF2, XRCC6, RACK1 and RPS3. Interacts with cytoplasmic dynein 1 intermediate chain (DYNC1I1 or DYNC1I2). In terms of processing, the N-terminus is blocked. As to expression, detected in heart, thymis and brain.

It is found in the cytoplasm. The protein resides in the nucleus. The protein localises to the nucleolus. Its subcellular location is the nucleoplasm. The catalysed reaction is [protein]-peptidylproline (omega=180) = [protein]-peptidylproline (omega=0). Less sensitive to inhibition by cyclosporin A than is CYP-18. PPIase that catalyzes the cis-trans isomerization of proline imidic peptide bonds in oligopeptides and may therefore assist protein folding. Proposed to act as a co-chaperone in HSP90 complexes such as in unligated steroid receptors heterocomplexes. Different co-chaperones seem to compete for association with HSP90 thus establishing distinct HSP90-co-chaperone-receptor complexes with the potential to exert tissue-specific receptor activity control. May have a preference for estrogen receptor complexes and is not found in glucocorticoid receptor complexes. May be involved in cytoplasmic dynein-dependent movement of the receptor from the cytoplasm to the nucleus. May regulate MYB by inhibiting its DNA-binding activity. Involved in regulation of AHR signaling by promoting the formation of the AHR:ARNT dimer; the function is independent of HSP90 but requires the chaperone activity. Involved in regulation of UV radiation-induced apoptosis. This is Peptidyl-prolyl cis-trans isomerase D from Bos taurus (Bovine).